The primary structure comprises 246 residues: 5'-nucleotidase SurE (246 aa).

A divalent metal cation is bound by residues Asp8, Asp9, Ser39, and Asn91.

It belongs to the SurE nucleotidase family. A divalent metal cation is required as a cofactor.

The protein resides in the cytoplasm. It catalyses the reaction a ribonucleoside 5'-phosphate + H2O = a ribonucleoside + phosphate. Functionally, nucleotidase that shows phosphatase activity on nucleoside 5'-monophosphates. In Dechloromonas aromatica (strain RCB), this protein is 5'-nucleotidase SurE.